Consider the following 375-residue polypeptide: Neuropeptide Y receptor type 4 (375 aa).

At 1 to 39 (MNTSHLMASLSPAFLQGKNGTNPLDSLYNLSDGCQDSAD) the chain is on the extracellular side. 3 N-linked (GlcNAc...) asparagine glycosylation sites follow: N2, N19, and N29. Residues 40-60 (LLAFIITTYSVETVLGVLGNL) traverse the membrane as a helical segment. At 61-78 (CLIFVTTRQKEKSNVTNL) the chain is on the cytoplasmic side. Residues 79 to 99 (LIANLAFSDFLMCLICQPLTV) traverse the membrane as a helical segment. The Extracellular segment spans residues 100-116 (TYTIMDYWIFGEVLCKM). Cysteines 114 and 201 form a disulfide. Residues 117–137 (LTFIQCMSVTVSILSLVLVAL) form a helical membrane-spanning segment. The Cytoplasmic segment spans residues 138-155 (ERHQLIINPTGWKPSISQ). A helical transmembrane segment spans residues 156–176 (AYLGIVVIWFISCFLSLPFLA). Over 177–211 (NSILNDLFHYNHSKVVEFLEDKVVCFVSWSSDHHR) the chain is Extracellular. N187 is a glycosylation site (N-linked (GlcNAc...) asparagine). A helical transmembrane segment spans residues 212-232 (LIYTTFLLLFQYCVPLAFILV). Over 233 to 262 (CYMRIYQRLQRQRRAFHTHTCSSRVGQMKR) the chain is Cytoplasmic. A helical membrane pass occupies residues 263–283 (INGMLMAMVTAFAVLWLPLHV). Over 284–301 (FNTLEDWYQEAIPACHGN) the chain is Extracellular. Residues 302–322 (LIFLMCHLFAMASTCVNPFIY) traverse the membrane as a helical segment. Residues 323–375 (GFLNINFKKDIKALVLTCRCRPPQGEPEPLPLSTVHTDLSKGSMRMGSKSNVM) are Cytoplasmic-facing. C340 is lipidated: S-palmitoyl cysteine.

It belongs to the G-protein coupled receptor 1 family. Detected in colon and brain.

It localises to the cell membrane. Its function is as follows. G protein-coupled receptor for PPY/pancreatic polypeptide/PP that is negatively coupled to cAMP. Has much lower affinity for the NPY/neuropeptide Y and PYY/peptide YY. In Rattus norvegicus (Rat), this protein is Neuropeptide Y receptor type 4 (Npy4r).